A 229-amino-acid polypeptide reads, in one-letter code: Large ribosomal subunit protein uL1 (229 aa).

Belongs to the universal ribosomal protein uL1 family. In terms of assembly, part of the 50S ribosomal subunit.

Its function is as follows. Binds directly to 23S rRNA. The L1 stalk is quite mobile in the ribosome, and is involved in E site tRNA release. In terms of biological role, protein L1 is also a translational repressor protein, it controls the translation of the L11 operon by binding to its mRNA. This Streptococcus pneumoniae serotype 2 (strain D39 / NCTC 7466) protein is Large ribosomal subunit protein uL1.